Consider the following 129-residue polypeptide: M-zodatoxin-Lt8b (129 aa).

The N-terminal stretch at 1–20 (MKYFVVALALVAAFACIAES) is a signal peptide. A propeptide spanning residues 21–60 (KPAESEHELAEVEEENELADLEDAVWLEHLADLSDLEEAR) is cleaved from the precursor. The short motif at 57-60 (EEAR) is the Processing quadruplet motif element.

Post-translationally, cleavage of the propeptide depends on the processing quadruplet motif (XXXR, with at least one of X being E). In terms of tissue distribution, expressed by the venom gland.

The protein resides in the secreted. In terms of biological role, insecticidal, cytolytic and antimicrobial peptide. Forms voltage-dependent, ion-permeable channels in membranes. At high concentration causes cell membrane lysis. This Lachesana tarabaevi (Spider) protein is M-zodatoxin-Lt8b (cit 1-2).